The sequence spans 181 residues: Endoribonuclease YbeY (181 aa).

Positions 115, 119, and 125 each coordinate Zn(2+).

Belongs to the endoribonuclease YbeY family. Requires Zn(2+) as cofactor.

It localises to the cytoplasm. Functionally, single strand-specific metallo-endoribonuclease involved in late-stage 70S ribosome quality control and in maturation of the 3' terminus of the 16S rRNA. The protein is Endoribonuclease YbeY of Bifidobacterium animalis subsp. lactis (strain AD011).